A 212-amino-acid polypeptide reads, in one-letter code: MLKGKFIVIEGIEGSGKTTICKTLKNILYEHGIKNVICVRDPGSTPLAEKIRSLLITKDKNEYMVNETELLLFYAARIQLIKNIIQPALNKGVWVISDRYFLSSLAYQCAGRKIKEEIVLLLQSLFLKNFNPNITFYLDVTPEIGLNRIKNRNEIDRIEQNTKFFFNNVRNKYLNLIKTKPGIIKINANRKIDKVKHSCKQQMLSWLNTENL.

11–18 (GIEGSGKT) contributes to the ATP binding site.

It belongs to the thymidylate kinase family.

It carries out the reaction dTMP + ATP = dTDP + ADP. Its function is as follows. Phosphorylation of dTMP to form dTDP in both de novo and salvage pathways of dTTP synthesis. The protein is Thymidylate kinase of Buchnera aphidicola subsp. Baizongia pistaciae (strain Bp).